Here is a 322-residue protein sequence, read N- to C-terminus: Sideroflexin-1 (322 aa).

The residue at position 2 (Ser-2) is an N-acetylserine. Over 2–102 the chain is Mitochondrial matrix; the sequence is SGEVPPNINI…MSAQVPMNMT (101 aa). The chain crosses the membrane as a helical span at residues 103 to 120; that stretch reads ITGCMMTFYRTTPAVLFW. At 121 to 146 the chain is on the mitochondrial intermembrane side; that stretch reads QWINQSFNAVVNYTNRSGDAPLTVNE. Residues 147 to 167 form a helical membrane-spanning segment; the sequence is LGTAYVSATTGAVATALGLNA. The Mitochondrial matrix segment spans residues 168-174; it reads LTKRVSP. The chain crosses the membrane as a helical span at residues 175 to 195; it reads LIGRFVPFAAVAAANCINIPL. Residues 196–228 are Mitochondrial intermembrane-facing; sequence MRQRELKVGIPVTDENGTRLGESTNAAKQAITQ. Residues 229-249 traverse the membrane as a helical segment; sequence VVISRILMAAPGMAIPPFIMN. Residues 250 to 266 are Mitochondrial matrix-facing; it reads TLEKKAFLKRFPWMSAP. The chain crosses the membrane as a helical span at residues 267-287; the sequence is IQVTLVGFCLVFATPLCCALF. The Mitochondrial intermembrane segment spans residues 288 to 322; the sequence is PQKSSMSVTSLEDELQASIQRTHPEIRRVYFNKGL.

Belongs to the sideroflexin family. As to expression, widely expressed, with highest expression in kidney and liver.

Its subcellular location is the mitochondrion inner membrane. The catalysed reaction is L-serine(in) = L-serine(out). It catalyses the reaction L-alanine(in) = L-alanine(out). It carries out the reaction L-cysteine(in) = L-cysteine(out). Functionally, amino acid transporter importing serine, an essential substrate of the mitochondrial branch of the one-carbon pathway, into mitochondria. Mitochondrial serine is then converted to glycine and formate, which exits to the cytosol where it is used to generate the charged folates that serve as one-carbon donors. May also transport other amino acids including alanine and cysteine. The polypeptide is Sideroflexin-1 (Mus musculus (Mouse)).